Consider the following 218-residue polypeptide: MVQKVVVIFSGGMDSFTVLNMAVKEGYEVHALSFNYGQRHSKELDYASRACITLGVAHKIIDISAINELIGGSSLTSDVDIPEGHYAEESMKSTVVPNRNMILLSMAVGYAVSLDANKVYYGAHSGDHDIYPDCRPEFVERMNDVCAIANYEKVEIVSPFLYQSKIDILTAGLNMGLDYNLTWTCYNGREKACGKCGACQERLEAFDKNNAQDPLEYE.

9–19 (FSGGMDSFTVL) contributes to the ATP binding site. The Zn(2+) site is built by Cys-185, Cys-193, Cys-196, and Cys-199.

Belongs to the QueC family. Requires Zn(2+) as cofactor.

The enzyme catalyses 7-carboxy-7-deazaguanine + NH4(+) + ATP = 7-cyano-7-deazaguanine + ADP + phosphate + H2O + H(+). It functions in the pathway purine metabolism; 7-cyano-7-deazaguanine biosynthesis. Functionally, catalyzes the ATP-dependent conversion of 7-carboxy-7-deazaguanine (CDG) to 7-cyano-7-deazaguanine (preQ(0)). This is 7-cyano-7-deazaguanine synthase from Pseudoalteromonas atlantica (strain T6c / ATCC BAA-1087).